Reading from the N-terminus, the 346-residue chain is Phosphate acyltransferase (346 aa).

This sequence belongs to the PlsX family. In terms of assembly, homodimer. Probably interacts with PlsY.

The protein resides in the cytoplasm. The enzyme catalyses a fatty acyl-[ACP] + phosphate = an acyl phosphate + holo-[ACP]. The protein operates within lipid metabolism; phospholipid metabolism. Its function is as follows. Catalyzes the reversible formation of acyl-phosphate (acyl-PO(4)) from acyl-[acyl-carrier-protein] (acyl-ACP). This enzyme utilizes acyl-ACP as fatty acyl donor, but not acyl-CoA. The protein is Phosphate acyltransferase of Brucella ovis (strain ATCC 25840 / 63/290 / NCTC 10512).